Here is a 122-residue protein sequence, read N- to C-terminus: Large ribosomal subunit protein uL14 (122 aa).

It belongs to the universal ribosomal protein uL14 family. Part of the 50S ribosomal subunit. Forms a cluster with proteins L3 and L19. In the 70S ribosome, L14 and L19 interact and together make contacts with the 16S rRNA in bridges B5 and B8.

Binds to 23S rRNA. Forms part of two intersubunit bridges in the 70S ribosome. The polypeptide is Large ribosomal subunit protein uL14 (Mycobacterium sp. (strain KMS)).